We begin with the raw amino-acid sequence, 252 residues long: Phosphate import ATP-binding protein PstB 1 (252 aa).

An ABC transporter domain is found at 6 to 247 (LQIRDLSVYY…PKRKETEDYI (242 aa)). 38–45 (GPSGSGKS) provides a ligand contact to ATP.

This sequence belongs to the ABC transporter superfamily. Phosphate importer (TC 3.A.1.7) family. In terms of assembly, the complex is composed of two ATP-binding proteins (PstB), two transmembrane proteins (PstC and PstA) and a solute-binding protein (PstS).

The protein localises to the cell membrane. It catalyses the reaction phosphate(out) + ATP + H2O = ADP + 2 phosphate(in) + H(+). Its function is as follows. Part of the ABC transporter complex PstSACB involved in phosphate import. Responsible for energy coupling to the transport system. This Streptococcus pyogenes serotype M1 protein is Phosphate import ATP-binding protein PstB 1.